A 393-amino-acid chain; its full sequence is Lysine/ornithine decarboxylase (393 aa).

Lys-51 is modified (N6-(pyridoxal phosphate)lysine). Cys-323 acts as the Proton donor; shared with dimeric partner in catalysis.

Belongs to the Orn/Lys/Arg decarboxylase class-II family. As to quaternary structure, homodimer. The cofactor is pyridoxal 5'-phosphate.

It carries out the reaction L-lysine + H(+) = cadaverine + CO2. The catalysed reaction is L-ornithine + H(+) = putrescine + CO2. It functions in the pathway amine and polyamine biosynthesis; putrescine biosynthesis via L-ornithine pathway; putrescine from L-ornithine: step 1/1. With respect to regulation, inhibited competitively by both alpha-difluoromethyllysine and alpha-difluoromethylornithine. Its function is as follows. Decarboxylates both L-lysine and L-ornithine with similar catalytic efficiency. In Selenomonas ruminantium, this protein is Lysine/ornithine decarboxylase (ldc).